The sequence spans 398 residues: Succinate--CoA ligase [ADP-forming] subunit beta (398 aa).

Residues 9 to 250 form the ATP-grasp domain; it reads KQLFARYGVP…VDEEDPVELQ (242 aa). Residues lysine 50, 57-59, glutamate 104, leucine 107, and glutamate 112 contribute to the ATP site; that span reads GRG. Residues asparagine 205 and aspartate 219 each contribute to the Mg(2+) site. Substrate-binding positions include asparagine 270 and 327–329; that span reads GIM.

The protein belongs to the succinate/malate CoA ligase beta subunit family. In terms of assembly, heterotetramer of two alpha and two beta subunits. Mg(2+) is required as a cofactor.

It carries out the reaction succinate + ATP + CoA = succinyl-CoA + ADP + phosphate. It catalyses the reaction GTP + succinate + CoA = succinyl-CoA + GDP + phosphate. The protein operates within carbohydrate metabolism; tricarboxylic acid cycle; succinate from succinyl-CoA (ligase route): step 1/1. Succinyl-CoA synthetase functions in the citric acid cycle (TCA), coupling the hydrolysis of succinyl-CoA to the synthesis of either ATP or GTP and thus represents the only step of substrate-level phosphorylation in the TCA. The beta subunit provides nucleotide specificity of the enzyme and binds the substrate succinate, while the binding sites for coenzyme A and phosphate are found in the alpha subunit. This chain is Succinate--CoA ligase [ADP-forming] subunit beta, found in Sorangium cellulosum (strain So ce56) (Polyangium cellulosum (strain So ce56)).